The primary structure comprises 270 residues: 3-methyl-2-oxobutanoate hydroxymethyltransferase (270 aa).

2 residues coordinate Mg(2+): Asp48 and Asp87. Residues 48–49, Asp87, and Lys117 each bind 3-methyl-2-oxobutanoate; that span reads DS. Glu119 is a Mg(2+) binding site. Glu186 functions as the Proton acceptor in the catalytic mechanism.

Belongs to the PanB family. In terms of assembly, homodecamer; pentamer of dimers. The cofactor is Mg(2+).

It localises to the cytoplasm. The enzyme catalyses 3-methyl-2-oxobutanoate + (6R)-5,10-methylene-5,6,7,8-tetrahydrofolate + H2O = 2-dehydropantoate + (6S)-5,6,7,8-tetrahydrofolate. Its pathway is cofactor biosynthesis; (R)-pantothenate biosynthesis; (R)-pantoate from 3-methyl-2-oxobutanoate: step 1/2. In terms of biological role, catalyzes the reversible reaction in which hydroxymethyl group from 5,10-methylenetetrahydrofolate is transferred onto alpha-ketoisovalerate to form ketopantoate. The protein is 3-methyl-2-oxobutanoate hydroxymethyltransferase of Synechococcus sp. (strain RCC307).